A 254-amino-acid polypeptide reads, in one-letter code: Peptide methionine sulfoxide reductase A5 (254 aa).

A signal peptide spans 1-33; sequence MAISLKRNRFFIPYTNLVFFFFLCVSLLDKTVS.

It belongs to the MsrA Met sulfoxide reductase family.

It catalyses the reaction L-methionyl-[protein] + [thioredoxin]-disulfide + H2O = L-methionyl-(S)-S-oxide-[protein] + [thioredoxin]-dithiol. The catalysed reaction is [thioredoxin]-disulfide + L-methionine + H2O = L-methionine (S)-S-oxide + [thioredoxin]-dithiol. Catalyzes the reduction of methionine sulfoxide (MetSO) to methionine in proteins. Plays a protective role against oxidative stress by restoring activity to proteins that have been inactivated by methionine oxidation. MSRA family specifically reduces the MetSO S-enantiomer. The sequence is that of Peptide methionine sulfoxide reductase A5 (MSRA5) from Arabidopsis thaliana (Mouse-ear cress).